We begin with the raw amino-acid sequence, 152 residues long: Dimethylsulfoniopropionate lyase DddW (152 aa).

In terms of domain architecture, Cupin type-2 spans 69–124; that stretch reads IAEFGPGHQLRPHRHTPPEFYLGLEGSGIVTIDGVPHEIRAGVALYIPGDAEHGTV. Residues H83, E87, Y89, and H121 each coordinate Fe cation.

The protein belongs to the non-heme iron-dependent dioxygenase family. Homodimer. Fe(2+) is required as a cofactor.

The catalysed reaction is S,S-dimethyl-beta-propiothetin = acrylate + dimethyl sulfide + H(+). Functionally, able to cleave dimethylsulfoniopropionate (DMSP), releasing dimethyl sulfide (DMS) and acrylate. DMS is the principal form by which sulfur is transported from oceans to the atmosphere. The chain is Dimethylsulfoniopropionate lyase DddW from Ruegeria pomeroyi (strain ATCC 700808 / DSM 15171 / DSS-3) (Silicibacter pomeroyi).